The primary structure comprises 329 residues: UDP-3-O-acylglucosamine N-acyltransferase (329 aa).

The active-site Proton acceptor is H224.

It belongs to the transferase hexapeptide repeat family. LpxD subfamily. Homotrimer.

It catalyses the reaction a UDP-3-O-[(3R)-3-hydroxyacyl]-alpha-D-glucosamine + a (3R)-hydroxyacyl-[ACP] = a UDP-2-N,3-O-bis[(3R)-3-hydroxyacyl]-alpha-D-glucosamine + holo-[ACP] + H(+). It participates in bacterial outer membrane biogenesis; LPS lipid A biosynthesis. Its function is as follows. Catalyzes the N-acylation of UDP-3-O-acylglucosamine using 3-hydroxyacyl-ACP as the acyl donor. Is involved in the biosynthesis of lipid A, a phosphorylated glycolipid that anchors the lipopolysaccharide to the outer membrane of the cell. The protein is UDP-3-O-acylglucosamine N-acyltransferase of Albidiferax ferrireducens (strain ATCC BAA-621 / DSM 15236 / T118) (Rhodoferax ferrireducens).